The chain runs to 128 residues: Small ribosomal subunit protein uS11 (128 aa).

This sequence belongs to the universal ribosomal protein uS11 family. Part of the 30S ribosomal subunit. Interacts with proteins S7 and S18. Binds to IF-3.

Located on the platform of the 30S subunit, it bridges several disparate RNA helices of the 16S rRNA. Forms part of the Shine-Dalgarno cleft in the 70S ribosome. In Onion yellows phytoplasma (strain OY-M), this protein is Small ribosomal subunit protein uS11.